Consider the following 83-residue polypeptide: Putative defensin-like protein 111 (83 aa).

Residues 1–24 (MAITKKILLPFVLTILFVISSVHC) form the signal peptide. 4 cysteine pairs are disulfide-bonded: cysteine 40–cysteine 80, cysteine 46–cysteine 69, cysteine 54–cysteine 78, and cysteine 58–cysteine 79.

The protein belongs to the DEFL family.

It localises to the secreted. The chain is Putative defensin-like protein 111 (LCR50) from Arabidopsis thaliana (Mouse-ear cress).